We begin with the raw amino-acid sequence, 324 residues long: Acetyl-coenzyme A carboxylase carboxyl transferase subunit alpha (324 aa).

In terms of domain architecture, CoA carboxyltransferase C-terminal spans 37–291 (ILEDKLENLE…DLMLRKTFEQ (255 aa)).

The protein belongs to the AccA family. Acetyl-CoA carboxylase is a heterohexamer composed of biotin carboxyl carrier protein (AccB), biotin carboxylase (AccC) and two subunits each of ACCase subunit alpha (AccA) and ACCase subunit beta (AccD).

The protein resides in the cytoplasm. The enzyme catalyses N(6)-carboxybiotinyl-L-lysyl-[protein] + acetyl-CoA = N(6)-biotinyl-L-lysyl-[protein] + malonyl-CoA. It participates in lipid metabolism; malonyl-CoA biosynthesis; malonyl-CoA from acetyl-CoA: step 1/1. Functionally, component of the acetyl coenzyme A carboxylase (ACC) complex. First, biotin carboxylase catalyzes the carboxylation of biotin on its carrier protein (BCCP) and then the CO(2) group is transferred by the carboxyltransferase to acetyl-CoA to form malonyl-CoA. The sequence is that of Acetyl-coenzyme A carboxylase carboxyl transferase subunit alpha from Bacillus cereus (strain Q1).